The primary structure comprises 405 residues: Envelope glycoprotein M (405 aa).

Over 1–17 (MKSSKNDTFVYRTWVKT) the chain is Intravirion. Residues 18–38 (LVVYFVMFVMSAVVPITAMFP) form a helical membrane-spanning segment. At 39 to 76 (NLGYPCYFNALVDYGALNLTNYNLAHHLTPTLYLEPPE) the chain is on the virion surface side. The chain crosses the membrane as a helical span at residues 77-97 (MFVYITLVFIADCVAFIYYAC). Residues 98–121 (GEVALIKARKKVSGLTDLSAWVSA) are Intravirion-facing. A helical membrane pass occupies residues 122 to 142 (VGSPTVLFLAILKLWSIQVFI). Residues 143-149 (QVLSYKH) lie on the Virion surface side of the membrane. Residues 150–170 (VFLSAFVYFLHFLASVLHACA) form a helical membrane-spanning segment. Residues 171 to 192 (CVTRFSPVWVVKAQDNSIPQDT) are Intravirion-facing. Residues 193 to 215 (FLWWVVFYLKPVVTNLYLGCLAL) form a helical membrane-spanning segment. Over 216–245 (ETLVFSLSVFLALGNSFYFMVGDMVLGAVN) the chain is Virion surface. A helical membrane pass occupies residues 246–266 (LFLILPIFWYILTEVWLASFM). Residue R267 is a topological domain, intravirion. The chain crosses the membrane as a helical span at residues 268–288 (HNFGFYCGMFIASIILILPLV). The Virion surface segment spans residues 289-299 (RYEAVFVSAKL). The helical transmembrane segment at 300 to 320 (HTTVAINVAIIPILCSVAMLI) threads the bilayer. At 321 to 405 (RICRIFKSMR…TTDSEEEIFP (85 aa)) the chain is on the intravirion side. The tract at residues 346-405 (LESEPRPRPSRTPSPGRNRRRSSTSSSSSRSTRRQRPVSTQALVSSVLPMTTDSEEEIFP) is disordered. Residues 386-397 (QALVSSVLPMTT) show a composition bias toward polar residues.

Belongs to the herpesviridae glycoprotein M family. Interacts (via N-terminus) with gN (via N-terminus). The gM-gN heterodimer forms the gCII complex.

Its subcellular location is the virion membrane. The protein localises to the host Golgi apparatus. It localises to the host trans-Golgi network. It is found in the host endosome membrane. The protein resides in the host nucleus inner membrane. Functionally, envelope glycoprotein important for virion assembly and egress. Plays a role in the correct incorporation of gH-gL into virion membrane. Directs the glycoprotein N (gN) to the host trans-Golgi network. This Epstein-Barr virus (strain GD1) (HHV-4) protein is Envelope glycoprotein M.